Here is a 523-residue protein sequence, read N- to C-terminus: Light-independent protochlorophyllide reductase subunit B (523 aa).

Residue Asp-36 coordinates [4Fe-4S] cluster. Asp-290 functions as the Proton donor in the catalytic mechanism. Substrate is bound at residue 425–426 (GL).

The protein belongs to the ChlB/BchB/BchZ family. As to quaternary structure, protochlorophyllide reductase is composed of three subunits; ChlL, ChlN and ChlB. Forms a heterotetramer of two ChlB and two ChlN subunits. Requires [4Fe-4S] cluster as cofactor.

It catalyses the reaction chlorophyllide a + oxidized 2[4Fe-4S]-[ferredoxin] + 2 ADP + 2 phosphate = protochlorophyllide a + reduced 2[4Fe-4S]-[ferredoxin] + 2 ATP + 2 H2O. Its pathway is porphyrin-containing compound metabolism; chlorophyll biosynthesis (light-independent). Component of the dark-operative protochlorophyllide reductase (DPOR) that uses Mg-ATP and reduced ferredoxin to reduce ring D of protochlorophyllide (Pchlide) to form chlorophyllide a (Chlide). This reaction is light-independent. The NB-protein (ChlN-ChlB) is the catalytic component of the complex. This Prochlorococcus marinus (strain MIT 9301) protein is Light-independent protochlorophyllide reductase subunit B.